Consider the following 208-residue polypeptide: N-(5'-phosphoribosyl)anthranilate isomerase (208 aa).

Belongs to the TrpF family.

The catalysed reaction is N-(5-phospho-beta-D-ribosyl)anthranilate = 1-(2-carboxyphenylamino)-1-deoxy-D-ribulose 5-phosphate. The protein operates within amino-acid biosynthesis; L-tryptophan biosynthesis; L-tryptophan from chorismate: step 3/5. This is N-(5'-phosphoribosyl)anthranilate isomerase from Neisseria meningitidis serogroup C / serotype 2a (strain ATCC 700532 / DSM 15464 / FAM18).